Consider the following 88-residue polypeptide: U24 protein (88 aa).

The residue at position 6 (threonine 6) is a Phosphothreonine. Positions 8–11 (PPSY) match the PPXY motif motif. Residues 58–78 (FAFLVLTGLAIAMILFIAFVI) form a helical membrane-spanning segment.

As to quaternary structure, interacts with host ITCH; this interaction probably mediates ITCH degradation. Interacts probably with NEDD4.

Its subcellular location is the membrane. In terms of biological role, down-regulates the TCR/CD3E complex and the transferrin receptor TFRC in host T-cells by blocking them from recycling back to the cell surface. The protein is U24 protein (U24) of Human herpesvirus 6B (strain Z29) (HHV-6 variant B).